The following is a 225-amino-acid chain: MNSIKFPVLDRTTKNSVISTTLNDLSNWSELSSLWPLLYGTSCCFIEFASLIGSRFDFDRYGLVPRSSPRQADLILTAGTVTMKMAPSLVRLYEQMPEPKYVIAMGACTITGGMFSTDSYSTVRGVDKLIPVDVYLPGCPPKPEAVIDAITKLRKKIAREIYKDRIRPQQGNRCFTTNHKFFVVRSPHTGNYDQELLYPPSSTSEISTETFFKYKSPVSSHELVN.

4 residues coordinate [4Fe-4S] cluster: cysteine 43, cysteine 44, cysteine 108, and cysteine 139.

Belongs to the complex I 20 kDa subunit family. NDH is composed of at least 16 different subunits, 5 of which are encoded in the nucleus. [4Fe-4S] cluster is required as a cofactor.

It localises to the plastid. The protein localises to the chloroplast thylakoid membrane. It carries out the reaction a plastoquinone + NADH + (n+1) H(+)(in) = a plastoquinol + NAD(+) + n H(+)(out). It catalyses the reaction a plastoquinone + NADPH + (n+1) H(+)(in) = a plastoquinol + NADP(+) + n H(+)(out). In terms of biological role, NDH shuttles electrons from NAD(P)H:plastoquinone, via FMN and iron-sulfur (Fe-S) centers, to quinones in the photosynthetic chain and possibly in a chloroplast respiratory chain. The immediate electron acceptor for the enzyme in this species is believed to be plastoquinone. Couples the redox reaction to proton translocation, and thus conserves the redox energy in a proton gradient. The protein is NAD(P)H-quinone oxidoreductase subunit K, chloroplastic of Crucihimalaya wallichii (Rock-cress).